The chain runs to 568 residues: Zinc finger protein 768 (568 aa).

Positions 1-16 (MEREASSWGLESRDVH) are enriched in basic and acidic residues. Disordered stretches follow at residues 1–223 (MERE…SLGV), 228–247 (SFTQ…FDMP), and 264–287 (LNLT…QGPR). Residues Ser17, Ser23, and Ser27 each carry the phosphoserine modification. Residue Thr35 is modified to Phosphothreonine. 13 positions are modified to phosphoserine: Ser36, Ser65, Ser72, Ser79, Ser86, Ser93, Ser100, Ser107, Ser114, Ser121, Ser128, Ser135, and Ser149. Positions 62 to 80 (EPQSPEFEPQSPEFESQSP) are enriched in low complexity. Polar residues predominate over residues 110–122 (SDPQSPEFESQSP). The residue at position 152 (Tyr152) is a Phosphotyrosine. Ser154 carries the phosphoserine modification. The segment covering 159–186 (FESQSPGYESQSPGYEPQNSGDGVQNSE) has biased composition (polar residues). Thr189 is subject to Phosphothreonine. Ser191 is modified (phosphoserine). A C2H2-type 1 zinc finger spans residues 289-311 (NICGICGKSFGRGSTLIQHQRIH). Position 312 is a phosphothreonine (Thr312). Tyr317 carries the post-translational modification Phosphotyrosine. 4 C2H2-type zinc fingers span residues 317–339 (YKCE…QRTH), 345–367 (YKCP…QRTH), 373–395 (YKCP…QRTH), and 401–423 (YSCP…QRVH). 2 positions are modified to phosphoserine: Ser323 and Ser327. Thr424 bears the Phosphothreonine mark. 5 consecutive C2H2-type zinc fingers follow at residues 429-451 (FSCG…ARSH), 457-479 (FKCP…ARTH), 485-507 (YSCP…QRSH), 513-535 (YRCA…HRVH), and 541-563 (YKCD…QRTH). At Ser470 the chain carries Phosphoserine.

The protein belongs to the krueppel C2H2-type zinc-finger protein family. Interacts (via zinc-finger domains) with TP53 (via N-terminus); interaction might be facilitated by TP53 oligomerization state. Interacts with ELP3. Post-translationally, may be phosphorylated at residue 'Ser-5' of the tandem heptapeptide repeats in the N-terminus. Phosphorylation might be increased upon RAS pathway activation and negatively regulate protein stability.

It is found in the nucleus. Its subcellular location is the chromosome. Its function is as follows. Binds to mammalian-wide interspersed repeat (MIRs) sequences in euchromatin and promoter regions of genes at the consensus sequence 5'-GCTGTGTG-[N20]-CCTCTCTG-3', consisting of two anchor regions connected by a linker region; the linker region probably does not contribute to the binding specificity. Required for cell homeostasis. May be involved in transcriptional regulation. This chain is Zinc finger protein 768 (Znf768), found in Mus musculus (Mouse).